Reading from the N-terminus, the 819-residue chain is Capsid-associated protein Vp91 (819 aa).

An N-terminal signal peptide occupies residues 1-18; sequence MSDVVLLVLAIILITIFT. Residues 147-196 form a C2HC BV-type zinc finger; the sequence is CVPVDPCAGRAPGRYPMDERLLDTLVHNQPSDKDYSAGEHLHHPTLYLRC. 2 disulfide bridges follow: C207–C220 and C260–C273. The N-linked (GlcNAc...) asparagine; by host glycan is linked to N210. A Chitin-binding type-2 domain is found at 223–281; that stretch reads NELCEGRPDGFVLAYFPETLRVNEFVECRGGKHVVARCPDQQVFDRALMTCVQTHPCAF. Residues N588 and N609 are each glycosylated (N-linked (GlcNAc...) asparagine; by host). The segment at 650–671 is disordered; that stretch reads GDGDHWAPEAPPTQPEAPPAPE. A compositionally biased stretch (pro residues) spans 658–671; sequence EAPPTQPEAPPAPE. N-linked (GlcNAc...) asparagine; by host glycosylation is present at N752.

It is found in the virion. Functionally, probable capsid-associated protein. The chain is Capsid-associated protein Vp91 (p91) from Orgyia pseudotsugata (Douglas-fir tussock moth).